The primary structure comprises 951 residues: 2-oxoglutarate dehydrogenase E1 component (951 aa).

The interval 906–925 (RRRRSSPAEGNPTAHKQEQA) is disordered.

This sequence belongs to the alpha-ketoglutarate dehydrogenase family. As to quaternary structure, homodimer. Part of the 2-oxoglutarate dehydrogenase (OGDH) complex composed of E1 (2-oxoglutarate dehydrogenase), E2 (dihydrolipoamide succinyltransferase) and E3 (dihydrolipoamide dehydrogenase); the complex contains multiple copies of the three enzymatic components (E1, E2 and E3). Thiamine diphosphate serves as cofactor.

The catalysed reaction is N(6)-[(R)-lipoyl]-L-lysyl-[protein] + 2-oxoglutarate + H(+) = N(6)-[(R)-S(8)-succinyldihydrolipoyl]-L-lysyl-[protein] + CO2. E1 component of the 2-oxoglutarate dehydrogenase (OGDH) complex which catalyzes the decarboxylation of 2-oxoglutarate, the first step in the conversion of 2-oxoglutarate to succinyl-CoA and CO(2). The polypeptide is 2-oxoglutarate dehydrogenase E1 component (Exiguobacterium sp. (strain ATCC BAA-1283 / AT1b)).